Consider the following 190-residue polypeptide: Protein GrpE (190 aa).

It belongs to the GrpE family. Homodimer.

It is found in the cytoplasm. Functionally, participates actively in the response to hyperosmotic and heat shock by preventing the aggregation of stress-denatured proteins, in association with DnaK and GrpE. It is the nucleotide exchange factor for DnaK and may function as a thermosensor. Unfolded proteins bind initially to DnaJ; upon interaction with the DnaJ-bound protein, DnaK hydrolyzes its bound ATP, resulting in the formation of a stable complex. GrpE releases ADP from DnaK; ATP binding to DnaK triggers the release of the substrate protein, thus completing the reaction cycle. Several rounds of ATP-dependent interactions between DnaJ, DnaK and GrpE are required for fully efficient folding. In Streptococcus agalactiae serotype III (strain NEM316), this protein is Protein GrpE.